The primary structure comprises 735 residues: Protein-associating with the carboxyl-terminal domain of ezrin (735 aa).

Gly2 carries N-myristoyl glycine lipidation. The region spanning 2–245 is the Protein kinase domain; it reads GSENSALKSY…LSTLLSHDFF (244 aa). HEAT repeat units lie at residues 194–249, 285–323, 333–370, and 372–409; these read FGAL…RNDF, LIAS…NAPG, LFQS…HFTQ, and QLKK…LLGP. Ser439 carries the post-translational modification Phosphoserine. Disordered stretches follow at residues 505 to 545 and 604 to 648; these read LSDV…ASIH and VPLT…GLGL. Positions 528–538 are enriched in acidic residues; the sequence is WPDWSEPEEPE. Residues 547–735 form an interaction with EZR region; sequence WPREPCDVAE…EELAWEDNNW (189 aa). Ser701 carries the phosphoserine modification.

The protein belongs to the protein kinase superfamily. Interacts with EZR/VIL2 C-terminal domain. May be myristoylated; myristoylation may target it to Golgi compartment.

The protein localises to the cytoplasm. The protein resides in the golgi apparatus. Its subcellular location is the cell projection. It localises to the lamellipodium. In terms of biological role, may play a role in regulating cell adhesion/migration complexes in migrating cells. The protein is Protein-associating with the carboxyl-terminal domain of ezrin (Scyl3) of Mus musculus (Mouse).